A 331-amino-acid chain; its full sequence is Malate dehydrogenase (331 aa).

14-20 (GAAGSIG) serves as a coordination point for NAD(+). Substrate is bound by residues R95 and R101. NAD(+) contacts are provided by residues N108, Q115, and 132–134 (VGN). Residues N134 and R165 each coordinate substrate. H190 serves as the catalytic Proton acceptor.

The protein belongs to the LDH/MDH superfamily. MDH type 2 family.

It catalyses the reaction (S)-malate + NAD(+) = oxaloacetate + NADH + H(+). Functionally, catalyzes the reversible oxidation of malate to oxaloacetate. In Rhodococcus jostii (strain RHA1), this protein is Malate dehydrogenase.